The sequence spans 203 residues: Urease accessory protein UreG (203 aa).

Position 14-21 (Gly-14–Thr-21) interacts with GTP.

Belongs to the SIMIBI class G3E GTPase family. UreG subfamily. In terms of assembly, homodimer. UreD, UreF and UreG form a complex that acts as a GTP-hydrolysis-dependent molecular chaperone, activating the urease apoprotein by helping to assemble the nickel containing metallocenter of UreC. The UreE protein probably delivers the nickel.

It is found in the cytoplasm. Its function is as follows. Facilitates the functional incorporation of the urease nickel metallocenter. This process requires GTP hydrolysis, probably effectuated by UreG. The polypeptide is Urease accessory protein UreG (Rhizobium etli (strain CIAT 652)).